Consider the following 424-residue polypeptide: UDP-N-acetylglucosamine 1-carboxyvinyltransferase (424 aa).

22-23 (KN) is a binding site for phosphoenolpyruvate. R93 provides a ligand contact to UDP-N-acetyl-alpha-D-glucosamine. The active-site Proton donor is the C117. At C117 the chain carries 2-(S-cysteinyl)pyruvic acid O-phosphothioketal. Residues 162–165 (KVSV), D307, and I329 each bind UDP-N-acetyl-alpha-D-glucosamine.

It belongs to the EPSP synthase family. MurA subfamily.

The protein localises to the cytoplasm. It catalyses the reaction phosphoenolpyruvate + UDP-N-acetyl-alpha-D-glucosamine = UDP-N-acetyl-3-O-(1-carboxyvinyl)-alpha-D-glucosamine + phosphate. It functions in the pathway cell wall biogenesis; peptidoglycan biosynthesis. In terms of biological role, cell wall formation. Adds enolpyruvyl to UDP-N-acetylglucosamine. This is UDP-N-acetylglucosamine 1-carboxyvinyltransferase from Actinobacillus pleuropneumoniae serotype 5b (strain L20).